The sequence spans 502 residues: Actin nucleation-promoting factor WAS (502 aa).

The region spanning 39-148 is the WH1 domain; the sequence is LGRKCLTLAT…ALVQEKIQKR (110 aa). A disordered region spans residues 146-240; the sequence is QKRNQRQSGD…KKISKADIGA (95 aa). Polar residues predominate over residues 201–211; it reads DIQNPDITSSR. Position 221 is a phosphoserine (serine 221). Residues 238–251 enclose the CRIB domain; that stretch reads IGAPSGFKHVSHVG. Tyrosine 291 bears the Phosphotyrosine; by FYN and HCK mark. A disordered region spans residues 307 to 502; it reads MRRQEPLPPP…DEDEDDEWDD (196 aa). GRSGPLPPXP motif repeat units lie at residues 337–346 and 376–385; these read GRSGPLPPVP and GRSGPLPPPP. Pro residues predominate over residues 341–419; that stretch reads PLPPVPLGIA…PAPPPLPPAL (79 aa). A WH2 domain is found at 430–447; the sequence is GRGALLDQIRQGIQLNKT. Residues serine 483 and serine 484 each carry the phosphoserine; by CK2 modification. The span at 486–502 shows a compositional bias: acidic residues; sequence EGEDQAGDEDEDDEWDD.

In terms of assembly, binds the Arp2/3 complex. Interacts with CDC42, RAC, NCK, HCK, FYN, SRC kinase FGR, BTK, ABL1, PSTPIP1, WIP, and to the p85 subunit of PLC-gamma. Interacts (via C-terminus) with ALDOA. Interacts with NCK1 (via SH3 domains). Interacts with FCHSD2. (Microbial infection) Interacts with E.coli effector protein EspF(U). In terms of processing, phosphorylated at Tyr-291 by FYN and HCK, inducing WAS effector activity after TCR engagement. Phosphorylation at Tyr-291 enhances WAS activity in promoting actin polymerization and filopodia formation. As to expression, expressed predominantly in the thymus. Also found, to a much lesser extent, in the spleen.

The protein localises to the cytoplasm. The protein resides in the cytoskeleton. It is found in the nucleus. Functionally, effector protein for Rho-type GTPases that regulates actin filament reorganization via its interaction with the Arp2/3 complex. Important for efficient actin polymerization. Possible regulator of lymphocyte and platelet function. Mediates actin filament reorganization and the formation of actin pedestals upon infection by pathogenic bacteria. In addition to its role in the cytoplasmic cytoskeleton, also promotes actin polymerization in the nucleus, thereby regulating gene transcription and repair of damaged DNA. Promotes homologous recombination (HR) repair in response to DNA damage by promoting nuclear actin polymerization, leading to drive motility of double-strand breaks (DSBs). The chain is Actin nucleation-promoting factor WAS (WAS) from Homo sapiens (Human).